Here is a 211-residue protein sequence, read N- to C-terminus: Protein-methionine-sulfoxide reductase heme-binding subunit MsrQ (211 aa).

4 consecutive transmembrane segments (helical) span residues 10-30 (WLKV…VWAI), 82-102 (LWCF…ELGV), 116-136 (PYLT…FTST), and 153-173 (FVYL…KIIS).

Belongs to the MsrQ family. Heterodimer of a catalytic subunit (MsrP) and a heme-binding subunit (MsrQ). Requires FMN as cofactor. Heme b is required as a cofactor.

The protein resides in the cell inner membrane. Its function is as follows. Part of the MsrPQ system that repairs oxidized periplasmic proteins containing methionine sulfoxide residues (Met-O), using respiratory chain electrons. Thus protects these proteins from oxidative-stress damage caused by reactive species of oxygen and chlorine generated by the host defense mechanisms. MsrPQ is essential for the maintenance of envelope integrity under bleach stress, rescuing a wide series of structurally unrelated periplasmic proteins from methionine oxidation, including the primary periplasmic chaperone SurA and the lipoprotein Pal. MsrQ provides electrons for reduction to the reductase catalytic subunit MsrP, using the quinone pool of the respiratory chain. This is Protein-methionine-sulfoxide reductase heme-binding subunit MsrQ from Shigella dysenteriae serotype 1 (strain Sd197).